The following is a 419-amino-acid chain: UDP-N-acetylglucosamine 1-carboxyvinyltransferase 2 (419 aa).

22-23 (KN) provides a ligand contact to phosphoenolpyruvate. Residue Arg-92 coordinates UDP-N-acetyl-alpha-D-glucosamine. The active-site Proton donor is Asp-116. Residues 121–125 (RPIDQ), Asp-306, and Leu-328 each bind UDP-N-acetyl-alpha-D-glucosamine.

The protein belongs to the EPSP synthase family. MurA subfamily.

The protein resides in the cytoplasm. The catalysed reaction is phosphoenolpyruvate + UDP-N-acetyl-alpha-D-glucosamine = UDP-N-acetyl-3-O-(1-carboxyvinyl)-alpha-D-glucosamine + phosphate. It functions in the pathway cell wall biogenesis; peptidoglycan biosynthesis. Functionally, cell wall formation. Adds enolpyruvyl to UDP-N-acetylglucosamine. The polypeptide is UDP-N-acetylglucosamine 1-carboxyvinyltransferase 2 (Latilactobacillus sakei subsp. sakei (strain 23K) (Lactobacillus sakei subsp. sakei)).